The chain runs to 208 residues: Small ribosomal subunit protein uS4 (208 aa).

The S4 RNA-binding domain maps to 98 to 164; sequence SRLDNVVYRM…DRIKFALELA (67 aa).

Belongs to the universal ribosomal protein uS4 family. Part of the 30S ribosomal subunit. Contacts protein S5. The interaction surface between S4 and S5 is involved in control of translational fidelity.

Its function is as follows. One of the primary rRNA binding proteins, it binds directly to 16S rRNA where it nucleates assembly of the body of the 30S subunit. Functionally, with S5 and S12 plays an important role in translational accuracy. The sequence is that of Small ribosomal subunit protein uS4 from Nitrosococcus oceani (strain ATCC 19707 / BCRC 17464 / JCM 30415 / NCIMB 11848 / C-107).